A 471-amino-acid chain; its full sequence is Probable multidrug-efflux transporter MT1670 (471 aa).

The next 14 membrane-spanning stretches (helical) occupy residues 23-43 (IVLA…ISLL), 55-75 (LYAW…TTVN), 91-111 (LAVF…QILV), 116-136 (LQGI…NSTL), 146-166 (ALVS…GGLF), 174-194 (WAFG…PVAL), 213-233 (VPVW…VAAL), 237-257 (LVQT…FVVV), 279-299 (IYLT…VPLF), 308-328 (PVAA…GEVA), 337-357 (VIGH…ALGA), 366-386 (VGII…IGIA), 410-430 (AINV…GVVV), and 438-458 (VAAA…GVIA).

It belongs to the major facilitator superfamily.

It is found in the cell membrane. Functionally, could be involved in fluoroquinolones efflux. The chain is Probable multidrug-efflux transporter MT1670 from Mycobacterium tuberculosis (strain CDC 1551 / Oshkosh).